Consider the following 29-residue polypeptide: Dermaseptin-1.2TR (29 aa).

V29 bears the Valine amide mark.

Expressed by the skin glands.

The protein resides in the secreted. Has antimicrobial activity. The polypeptide is Dermaseptin-1.2TR (Phyllomedusa trinitatis (Trinidad leaf frog)).